The following is a 470-amino-acid chain: Siroheme synthase (470 aa).

The segment at 1-201 is precorrin-2 dehydrogenase /sirohydrochlorin ferrochelatase; sequence MDYFPIFCQL…NDHVQADQHV (201 aa). Residues 22–23 and 43–44 each bind NAD(+); these read EI and CE. Ser128 carries the phosphoserine modification. A uroporphyrinogen-III C-methyltransferase region spans residues 213-470; it reads GEVVLVGAGP…KVTECVAHVG (258 aa). Position 222 (Pro222) interacts with S-adenosyl-L-methionine. Asp245 functions as the Proton acceptor in the catalytic mechanism. The active-site Proton donor is the Lys267. Residues 298-300, Ile303, 328-329, Met379, and Gly408 contribute to the S-adenosyl-L-methionine site; these read GGD and TA.

This sequence in the N-terminal section; belongs to the precorrin-2 dehydrogenase / sirohydrochlorin ferrochelatase family. In the C-terminal section; belongs to the precorrin methyltransferase family.

The enzyme catalyses uroporphyrinogen III + 2 S-adenosyl-L-methionine = precorrin-2 + 2 S-adenosyl-L-homocysteine + H(+). It carries out the reaction precorrin-2 + NAD(+) = sirohydrochlorin + NADH + 2 H(+). It catalyses the reaction siroheme + 2 H(+) = sirohydrochlorin + Fe(2+). It functions in the pathway cofactor biosynthesis; adenosylcobalamin biosynthesis; precorrin-2 from uroporphyrinogen III: step 1/1. Its pathway is cofactor biosynthesis; adenosylcobalamin biosynthesis; sirohydrochlorin from precorrin-2: step 1/1. The protein operates within porphyrin-containing compound metabolism; siroheme biosynthesis; precorrin-2 from uroporphyrinogen III: step 1/1. It participates in porphyrin-containing compound metabolism; siroheme biosynthesis; siroheme from sirohydrochlorin: step 1/1. It functions in the pathway porphyrin-containing compound metabolism; siroheme biosynthesis; sirohydrochlorin from precorrin-2: step 1/1. In terms of biological role, multifunctional enzyme that catalyzes the SAM-dependent methylations of uroporphyrinogen III at position C-2 and C-7 to form precorrin-2 via precorrin-1. Then it catalyzes the NAD-dependent ring dehydrogenation of precorrin-2 to yield sirohydrochlorin. Finally, it catalyzes the ferrochelation of sirohydrochlorin to yield siroheme. The polypeptide is Siroheme synthase (Yersinia pestis).